A 212-amino-acid chain; its full sequence is ATP-dependent Clp protease proteolytic subunit 2 (212 aa).

Positions 1 to 20 are disordered; that stretch reads MSHNTSIASQGMPAMAGPET. Ser-107 serves as the catalytic Nucleophile. His-132 is an active-site residue.

This sequence belongs to the peptidase S14 family. As to quaternary structure, fourteen ClpP subunits assemble into 2 heptameric rings which stack back to back to give a disk-like structure with a central cavity, resembling the structure of eukaryotic proteasomes.

It localises to the cytoplasm. The catalysed reaction is Hydrolysis of proteins to small peptides in the presence of ATP and magnesium. alpha-casein is the usual test substrate. In the absence of ATP, only oligopeptides shorter than five residues are hydrolyzed (such as succinyl-Leu-Tyr-|-NHMec, and Leu-Tyr-Leu-|-Tyr-Trp, in which cleavage of the -Tyr-|-Leu- and -Tyr-|-Trp bonds also occurs).. Functionally, cleaves peptides in various proteins in a process that requires ATP hydrolysis. Has a chymotrypsin-like activity. Plays a major role in the degradation of misfolded proteins. The sequence is that of ATP-dependent Clp protease proteolytic subunit 2 from Cutibacterium acnes (strain DSM 16379 / KPA171202) (Propionibacterium acnes).